Consider the following 290-residue polypeptide: 33 kDa chaperonin (290 aa).

2 disulfides stabilise this stretch: C235/C237 and C268/C271.

Belongs to the HSP33 family. In terms of processing, under oxidizing conditions two disulfide bonds are formed involving the reactive cysteines. Under reducing conditions zinc is bound to the reactive cysteines and the protein is inactive.

The protein resides in the cytoplasm. Its function is as follows. Redox regulated molecular chaperone. Protects both thermally unfolding and oxidatively damaged proteins from irreversible aggregation. Plays an important role in the bacterial defense system toward oxidative stress. This is 33 kDa chaperonin from Streptococcus uberis (strain ATCC BAA-854 / 0140J).